A 68-amino-acid polypeptide reads, in one-letter code: Large ribosomal subunit protein bL35 (68 aa).

The protein belongs to the bacterial ribosomal protein bL35 family.

This is Large ribosomal subunit protein bL35 from Orientia tsutsugamushi (strain Ikeda) (Rickettsia tsutsugamushi).